We begin with the raw amino-acid sequence, 65 residues long: Large ribosomal subunit protein bL35 (65 aa).

The protein belongs to the bacterial ribosomal protein bL35 family.

The chain is Large ribosomal subunit protein bL35 from Rhodospirillum rubrum (strain ATCC 11170 / ATH 1.1.1 / DSM 467 / LMG 4362 / NCIMB 8255 / S1).